Here is an 839-residue protein sequence, read N- to C-terminus: MEKWASLDSDESEPPAQENSCPDPPDRDPNSKPPPAKPHIFATRSRTRLFGKGDSEEASPMDCPYEEGGLASCPIITVSSVVTLQRSVDGPTCLRQTSQDSVSTGVETPPRLYDRRSIFDAVAQSNCQELESLLSFLQKSKKRLTDSEFKDPETGKTCLLKAMLNLHNGQNDTIALLLDIARKTDSLKQFVNASYTDSYYKGQTALHIAIERRNMALVTLLVENGADVQAAANGDFFKKTKGRPGFYFGELPLSLAACTNQLAIVKFLLQNSWQPADISARDSVGNTVLHALVEVADNTADNTKFVTNMYNEILILGAKLHPTLKLEELTNKKGLTPLALAASSGKIGVLAYILQREIHEPECRHLSRKFTEWAYGPVHSSLYDLSCIDTCEKNSVLEVIAYSSSETPNRHDMLLVEPLNRLLQDKWDRFVKRIFYFNFFVYCLYMIIFTTAAYYRPVEGLPPYKLNNTVGDYFRVTGEILSVSGGVYFFFRGIQYFLQRRPSLKSLFVDSYSEILFFVQSLFMLVSVVLYFSHRKEYVASMVFSLAMGWTNMLYYTRGFQQMGIYAVMIEKMILRDLCRFMFVYLVFLFGFSTAVVTLIEDGKNNSLPVESPPHKCRGSACRPGNSYNSLYSTCLELFKFTIGMGDLEFTENYDFKAVFIILLLAYVILTYILLLNMLIALMGETVNKIAQESKNIWKLQRAITILDTEKSFLKCMRKAFRSGKLLQVGFTPDGKDDFRWCFRVDEVNWTTWNTNVGIINEDPGNCEGVKRTLSFSLRSGRVSGRNWKNFALVPLLRDASTRDRHSTQPEEVQLKHYTGSLKPEDAEVFKDSMAPGEK.

Residues 1–60 (MEKWASLDSDESEPPAQENSCPDPPDRDPNSKPPPAKPHIFATRSRTRLFGKGDSEEASP) are disordered. Topologically, residues 1 to 433 (MEKWASLDSD…QDKWDRFVKR (433 aa)) are cytoplasmic. One copy of the ANK 1 repeat lies at 111–139 (RLYDRRSIFDAVAQSNCQELESLLSFLQK). ATP is bound at residue arginine 116. Phosphoserine; by PKA and PKD is present on serine 117. Position 145 is a phosphothreonine; by PKA; in vitro (threonine 145). Residues 154–186 (TGKTCLLKAMLNLHNGQNDTIALLLDIARKTDS) form an ANK 2 repeat. Residues lysine 156, lysine 161, asparagine 165, 200–203 (YKGQ), and 211–212 (ER) each bind ATP. ANK repeat units lie at residues 204 to 229 (TALH…ADVQ), 250 to 277 (ELPL…QPAD), 286 to 322 (NTVL…KLHP), and 336 to 359 (TPLA…REIH). Threonine 371 is subject to Phosphothreonine; by PKA; in vitro. The stretch at 394–416 (NSVLEVIAYSSSETPNRHDMLLV) is one ANK 7 repeat. Residues 434 to 455 (IFYFNFFVYCLYMIIFTTAAYY) traverse the membrane as a helical segment. Residues 456 to 472 (RPVEGLPPYKLNNTVGD) are Extracellular-facing. Residues 473 to 497 (YFRVTGEILSVSGGVYFFFRGIQYF) form a helical membrane-spanning segment. Residues 498 to 510 (LQRRPSLKSLFVD) are Cytoplasmic-facing. Serine 503 is modified (phosphoserine; by PKC/PRKCE). Residues 511 to 532 (SYSEILFFVQSLFMLVSVVLYF) form a helical membrane-spanning segment. 512–513 (YS) provides a ligand contact to resiniferatoxin. Residues 533-535 (SHR) are Extracellular-facing. A helical membrane pass occupies residues 536-556 (KEYVASMVFSLAMGWTNMLYY). Residues threonine 551 and arginine 558 each contribute to the resiniferatoxin site. The Cytoplasmic segment spans residues 557 to 559 (TRG). A helical membrane pass occupies residues 560-598 (FQQMGIYAVMIEKMILRDLCRFMFVYLVFLFGFSTAVVT). At 599 to 630 (LIEDGKNNSLPVESPPHKCRGSACRPGNSYNS) the chain is on the extracellular side. Residue asparagine 605 is glycosylated (N-linked (GlcNAc...) asparagine). The segment at residues 631-652 (LYSTCLELFKFTIGMGDLEFTE) is an intramembrane region (pore-forming). Glycine 644 is a Na(+) binding site. The Selectivity filter signature appears at 644 to 647 (GMGD). Residue aspartate 647 coordinates Ca(2+). At 653–656 (NYDF) the chain is on the extracellular side. A helical transmembrane segment spans residues 657–683 (KAVFIILLLAYVILTYILLLNMLIALM). Residues 684 to 839 (GETVNKIAQE…FKDSMAPGEK (156 aa)) are Cytoplasmic-facing. The interval 685-713 (ETVNKIAQESKNIWKLQRAITILDTEKSF) is AD. Threonine 705 carries the post-translational modification Phosphothreonine. The segment at 768-802 (EGVKRTLSFSLRSGRVSGRNWKNFALVPLLRDAST) is interaction with calmodulin. Serine 775 carries the post-translational modification Phosphoserine. A required for PIP2-mediated channel inhibition region spans residues 778 to 793 (LRSGRVSGRNWKNFAL). A Phosphoserine; by PKC/PRKCE and PKC/PRKCZ modification is found at serine 801. Over residues 802 to 815 (TRDRHSTQPEEVQL) the composition is skewed to basic and acidic residues. The interval 802–839 (TRDRHSTQPEEVQLKHYTGSLKPEDAEVFKDSMAPGEK) is disordered. Position 821 is a phosphoserine (serine 821). Residues 823 to 839 (KPEDAEVFKDSMAPGEK) are compositionally biased toward basic and acidic residues.

Belongs to the transient receptor (TC 1.A.4) family. TrpV subfamily. TRPV1 sub-subfamily. Homotetramer. May also form a heteromeric channel with TRPV3. Interacts with CALM, PRKCM and CSK. Interacts with PRKCG and NTRK1, probably by forming a trimeric complex. Interacts with PIRT. Interacts with the Scolopendra mutilans RhTx toxin. Interacts with TMEM100. Interacts with PACS2. Post-translationally, phosphorylation by PKA reverses capsaicin-induced dephosphorylation at multiple sites probably including Ser-117 as a major phosphorylation site. Phosphorylation by CAMKII seems to regulate binding to vanilloids. Phosphorylated and modulated by PRKCE, PRKCM and probably PRKCZ. Dephosphorylation by calcineurin seems to lead to receptor desensitization and phosphorylation by CAMKII recovers activity. As to expression, detected in neurons in the root ganglia (at protein level). Detected in dorsal root ganglia.

It is found in the postsynaptic cell membrane. The protein resides in the cell projection. The protein localises to the dendritic spine membrane. Its subcellular location is the cell membrane. It carries out the reaction Ca(2+)(in) = Ca(2+)(out). The enzyme catalyses Mg(2+)(in) = Mg(2+)(out). It catalyses the reaction Na(+)(in) = Na(+)(out). The catalysed reaction is K(+)(in) = K(+)(out). With respect to regulation, the channel is sensitized by ATP binding. Repeated stimulation with capsaicin gives rise to progressively smaller responses, due to desensitization. This desensitization is triggered by the influx of calcium ions and is inhibited by elevated ATP levels. Ca(2+) and CALM displace ATP from its binding site and trigger a conformation change that leads to a closed, desensitized channel. The double-knot toxin (DkTx) from the Chinese earth tiger tarantula activates the channel and traps it in an open conformation. The Scolopendra mutilans RhTx toxin potentiates the heat activation pathway mediated by this channel by binding to the charge-rich outer pore region (in an activated state). Channel activity is activated via the interaction with PIRT and phosphatidylinositol 4,5-bisphosphate (PIP2). Both PIRT and PIP2 are required to activate channel activity. Intracellular PIP2 inhibits desensitization. Its function is as follows. Non-selective calcium permeant cation channel involved in detection of noxious chemical and thermal stimuli. Seems to mediate proton influx and may be involved in intracellular acidosis in nociceptive neurons. Involved in mediation of inflammatory pain and hyperalgesia. Sensitized by a phosphatidylinositol second messenger system activated by receptor tyrosine kinases, which involves PKC isozymes and PCL. Activation by vanilloids, like capsaicin, and temperatures higher than 42 degrees Celsius. Upon activation, exhibits a time- and Ca(2+)-dependent outward rectification, followed by a long-lasting refractory state. Mild extracellular acidic pH (6.5) potentiates channel activation by noxious heat and vanilloids, whereas acidic conditions (pH &lt;6) directly activate the channel. Can be activated by endogenous compounds, including 12-hydroperoxytetraenoic acid and bradykinin. Acts as ionotropic endocannabinoid receptor with central neuromodulatory effects. Triggers a form of long-term depression (TRPV1-LTD) mediated by the endocannabinoid anandamine in the hippocampus and nucleus accumbens by affecting AMPA receptors endocytosis. This chain is Transient receptor potential cation channel subfamily V member 1 (Trpv1), found in Mus musculus (Mouse).